Consider the following 210-residue polypeptide: Probable GTP-binding protein EngB (210 aa).

Residues 27–201 enclose the EngB-type G domain; that stretch reads MGIEVAFAGR…HQKLDIWFSQ (175 aa). Residues 35–42, 62–66, 80–83, 147–150, and 180–182 contribute to the GTP site; these read GRSNAGKS, GRTQL, DLPG, TKAD, and FSV. 2 residues coordinate Mg(2+): serine 42 and threonine 64.

The protein belongs to the TRAFAC class TrmE-Era-EngA-EngB-Septin-like GTPase superfamily. EngB GTPase family. The cofactor is Mg(2+).

Necessary for normal cell division and for the maintenance of normal septation. The sequence is that of Probable GTP-binding protein EngB from Photorhabdus laumondii subsp. laumondii (strain DSM 15139 / CIP 105565 / TT01) (Photorhabdus luminescens subsp. laumondii).